Reading from the N-terminus, the 375-residue chain is SAP-like protein BP-73 (375 aa).

Disordered regions lie at residues 46-113 (PNNH…VPGE), 130-233 (RARG…VKFQ), and 257-315 (TLEN…PSLQ). A compositionally biased stretch (basic residues) spans 59–70 (HQKGGSARRKSK). Residues 76 to 86 (DDSENIDEFDT) show a composition bias toward acidic residues. The span at 88 to 109 (IMSSKNGPPISLTSNSRPQATS) shows a compositional bias: polar residues. Basic and acidic residues-rich tracts occupy residues 134-152 (KGKEEKKPEQAKAQGERGS) and 163-186 (HSVDQRRKSGDEKEQSVDQTKRSN). Over residues 187-197 (ESGNKQNSSIF) the composition is skewed to polar residues. A compositionally biased stretch (acidic residues) spans 295–311 (DEPDASDTDEPSGEYDE). The segment at 338-375 (DLSTLKVTELRELAKSRGIKGYSKMKKNDLVELLSNMA) is interaction with WAXY.

In terms of assembly, binds to the DNA in the promoter region of WAXY containing the sequence 5'-ACGCACGCTAACGTGA-3'. As to expression, expressed in tissues with high cell division activities: in root tips, stem node, panicle, flower and immature seed. Weakly expressed in root and leaf.

May regulate cell proliferation and plant growth. The sequence is that of SAP-like protein BP-73 (BP-73) from Oryza sativa subsp. japonica (Rice).